The sequence spans 214 residues: Probable nicotinate-nucleotide adenylyltransferase (214 aa).

It belongs to the NadD family.

It carries out the reaction nicotinate beta-D-ribonucleotide + ATP + H(+) = deamido-NAD(+) + diphosphate. Its pathway is cofactor biosynthesis; NAD(+) biosynthesis; deamido-NAD(+) from nicotinate D-ribonucleotide: step 1/1. Its function is as follows. Catalyzes the reversible adenylation of nicotinate mononucleotide (NaMN) to nicotinic acid adenine dinucleotide (NaAD). This Psychromonas ingrahamii (strain DSM 17664 / CCUG 51855 / 37) protein is Probable nicotinate-nucleotide adenylyltransferase.